The chain runs to 239 residues: Glucosamine-6-phosphate deaminase (239 aa).

The active-site Proton acceptor; for enolization step is the Asp62. The active-site For ring-opening step is the Asn128. Residue His130 is the Proton acceptor; for ring-opening step of the active site. Glu135 serves as the catalytic For ring-opening step.

It belongs to the glucosamine/galactosamine-6-phosphate isomerase family. NagB subfamily.

The catalysed reaction is alpha-D-glucosamine 6-phosphate + H2O = beta-D-fructose 6-phosphate + NH4(+). The protein operates within amino-sugar metabolism; N-acetylneuraminate degradation; D-fructose 6-phosphate from N-acetylneuraminate: step 5/5. Catalyzes the reversible isomerization-deamination of glucosamine 6-phosphate (GlcN6P) to form fructose 6-phosphate (Fru6P) and ammonium ion. The chain is Glucosamine-6-phosphate deaminase from Lactobacillus johnsonii (strain CNCM I-12250 / La1 / NCC 533).